We begin with the raw amino-acid sequence, 272 residues long: Sulfate transporter CysZ (272 aa).

A run of 4 helical transmembrane segments spans residues 29–49 (FVIM…WLFI), 66–86 (WLSF…LLLF), 148–168 (IIAL…VPVL), and 219–239 (FVPV…TLMW).

This sequence belongs to the CysZ family.

It is found in the cell inner membrane. In terms of biological role, high affinity, high specificity proton-dependent sulfate transporter, which mediates sulfate uptake. Provides the sulfur source for the cysteine synthesis pathway. The sequence is that of Sulfate transporter CysZ from Haemophilus influenzae (strain PittGG).